The primary structure comprises 298 residues: Acetyl-coenzyme A carboxylase carboxyl transferase subunit beta (298 aa).

A CoA carboxyltransferase N-terminal domain is found at 26–295; it reads LWIKCPETGE…DNANAVVPLA (270 aa).

This sequence belongs to the AccD/PCCB family. Acetyl-CoA carboxylase is a heterohexamer composed of biotin carboxyl carrier protein (AccB), biotin carboxylase (AccC) and two subunits each of ACCase subunit alpha (AccA) and ACCase subunit beta (AccD).

It is found in the cytoplasm. It carries out the reaction N(6)-carboxybiotinyl-L-lysyl-[protein] + acetyl-CoA = N(6)-biotinyl-L-lysyl-[protein] + malonyl-CoA. Its pathway is lipid metabolism; malonyl-CoA biosynthesis; malonyl-CoA from acetyl-CoA: step 1/1. Functionally, component of the acetyl coenzyme A carboxylase (ACC) complex. Biotin carboxylase (BC) catalyzes the carboxylation of biotin on its carrier protein (BCCP) and then the CO(2) group is transferred by the transcarboxylase to acetyl-CoA to form malonyl-CoA. This Agrobacterium fabrum (strain C58 / ATCC 33970) (Agrobacterium tumefaciens (strain C58)) protein is Acetyl-coenzyme A carboxylase carboxyl transferase subunit beta.